The sequence spans 184 residues: Peptidyl-tRNA hydrolase (184 aa).

Residue tyrosine 14 participates in tRNA binding. Residue histidine 19 is the Proton acceptor of the active site. Residues phenylalanine 64, asparagine 66, and asparagine 112 each contribute to the tRNA site.

The protein belongs to the PTH family. Monomer.

The protein resides in the cytoplasm. It catalyses the reaction an N-acyl-L-alpha-aminoacyl-tRNA + H2O = an N-acyl-L-amino acid + a tRNA + H(+). Its function is as follows. Hydrolyzes ribosome-free peptidyl-tRNAs (with 1 or more amino acids incorporated), which drop off the ribosome during protein synthesis, or as a result of ribosome stalling. In terms of biological role, catalyzes the release of premature peptidyl moieties from peptidyl-tRNA molecules trapped in stalled 50S ribosomal subunits, and thus maintains levels of free tRNAs and 50S ribosomes. This is Peptidyl-tRNA hydrolase from Thermoanaerobacter sp. (strain X514).